The chain runs to 296 residues: Transmembrane O-methyltransferase (296 aa).

The chain crosses the membrane as a helical span at residues 36–56; the sequence is VGTMSPAIALAFLPLVVTLLV. S-adenosyl-L-methionine contacts are provided by residues Glu-142, 144–145, Ser-150, Glu-168, and Ser-198; that span reads GT.

This sequence belongs to the class I-like SAM-binding methyltransferase superfamily. Cation-dependent O-methyltransferase family. As to quaternary structure, interacts with LHFPL5, PCDH15, TMC1, TMC2 and TMIE. Interacts directly with TMC1. The interaction of TOMT with TMC1 and TMC2 is required for the transportation of TMC1/2 into the stereocilia of hair cells.

It localises to the membrane. The protein resides in the cytoplasm. It is found in the endoplasmic reticulum. The catalysed reaction is a catechol + S-adenosyl-L-methionine = a guaiacol + S-adenosyl-L-homocysteine + H(+). Catalyzes the O-methylation, and thereby the inactivation, of catecholamine neurotransmitters and catechol hormones. Required for auditory function. Component of the cochlear hair cell's mechanotransduction (MET) machinery. Involved in the assembly of the asymmetric tip-link MET complex. Required for transportation of TMC1 and TMC2 proteins into the mechanically sensitive stereocilia of the hair cells. The function in MET is independent of the enzymatic activity. This chain is Transmembrane O-methyltransferase, found in Macaca mulatta (Rhesus macaque).